The following is a 353-amino-acid chain: Melatonin receptor type 1A (353 aa).

Over residues 1–15 the composition is skewed to polar residues; that stretch reads MKGNGSTLLNASQQA. The disordered stretch occupies residues 1-23; that stretch reads MKGNGSTLLNASQQAPGVGEGGG. The Extracellular portion of the chain corresponds to 1–32; it reads MKGNGSTLLNASQQAPGVGEGGGPRPSWLAST. N-linked (GlcNAc...) asparagine glycosylation is found at Asn4 and Asn10. A helical membrane pass occupies residues 33–53; sequence LAFILIFTIVVDILGNLLVIL. Over 54–66 the chain is Cytoplasmic; sequence SVYRNKKLRNAGN. The helical transmembrane segment at 67 to 87 threads the bilayer; it reads IFVVSLAIADLVVAIYPYPLV. Over 88 to 105 the chain is Extracellular; that stretch reads LTSIFNNGWNLGYLHCQI. Cys103 and Cys180 are joined by a disulfide. The helical transmembrane segment at 106–126 threads the bilayer; the sequence is SAFLMGLSVIGSIFNITGIAI. The Cytoplasmic segment spans residues 127–147; sequence NRYCYICHSLKYDRLYSNKNS. Residues 148 to 168 form a helical membrane-spanning segment; the sequence is LCYVFLIWVLTLVAIMPNLQT. Residues 169-190 lie on the Extracellular side of the membrane; the sequence is GTLQYDPRIYSCTFTQSVSSAY. A helical transmembrane segment spans residues 191–211; that stretch reads TIAVVVFHFIVPMIIVIFCYL. Over 212–243 the chain is Cytoplasmic; the sequence is RIWILVLQVRRRVKPDSKPRLKPQDFRNFVTM. The chain crosses the membrane as a helical span at residues 244–264; it reads FVVFVLFAICWAPLNFIGLIV. The Extracellular segment spans residues 265 to 277; the sequence is ASDPATMAPRIPE. Residues 278-298 form a helical membrane-spanning segment; that stretch reads WLFVASYYMAYFNSCLNAIIY. The Cytoplasmic segment spans residues 299-353; that stretch reads GLLNQNFRQEYKRILVSLFTAKMCFVDSSNDPADKIKCKPAPLIANNNLIKVDSV.

The protein belongs to the G-protein coupled receptor 1 family. In terms of tissue distribution, at least in the brain, more precisely in the pars tuberalis and the suprachiasmatic nucleus.

The protein resides in the cell membrane. High affinity receptor for melatonin. Likely to mediate the reproductive and circadian actions of melatonin. The activity of this receptor is mediated by pertussis toxin sensitive G proteins that inhibit adenylate cyclase activity. Possibly involved in sleep induction, by melatonin activation of the potassium channel KCNMA1/BK and the dissociation of G-beta and G-gamma subunits, thereby decreasing synaptic transmission. In Phodopus sungorus (Striped hairy-footed hamster), this protein is Melatonin receptor type 1A (MTNR1A).